Consider the following 678-residue polypeptide: Glycine--tRNA ligase beta subunit (678 aa).

It belongs to the class-II aminoacyl-tRNA synthetase family. As to quaternary structure, tetramer of two alpha and two beta subunits.

The protein localises to the cytoplasm. The enzyme catalyses tRNA(Gly) + glycine + ATP = glycyl-tRNA(Gly) + AMP + diphosphate. The polypeptide is Glycine--tRNA ligase beta subunit (Streptococcus pneumoniae (strain 70585)).